The sequence spans 468 residues: ATP synthase subunit beta (468 aa).

155–162 (GGAGVGKT) is an ATP binding site.

This sequence belongs to the ATPase alpha/beta chains family. As to quaternary structure, F-type ATPases have 2 components, CF(1) - the catalytic core - and CF(0) - the membrane proton channel. CF(1) has five subunits: alpha(3), beta(3), gamma(1), delta(1), epsilon(1). CF(0) has three main subunits: a(1), b(2) and c(9-12). The alpha and beta chains form an alternating ring which encloses part of the gamma chain. CF(1) is attached to CF(0) by a central stalk formed by the gamma and epsilon chains, while a peripheral stalk is formed by the delta and b chains.

Its subcellular location is the cell membrane. The enzyme catalyses ATP + H2O + 4 H(+)(in) = ADP + phosphate + 5 H(+)(out). Its function is as follows. Produces ATP from ADP in the presence of a proton gradient across the membrane. The catalytic sites are hosted primarily by the beta subunits. In Streptococcus mutans serotype c (strain ATCC 700610 / UA159), this protein is ATP synthase subunit beta.